Consider the following 447-residue polypeptide: Cysteine--tRNA ligase (447 aa).

Position 28 (C28) interacts with Zn(2+). Positions 30–40 (PTVYNYIHIGN) match the 'HIGH' region motif. Zn(2+) is bound by residues C211, H236, and E240. A 'KMSKS' region motif is present at residues 268-272 (KMSKS). K271 lines the ATP pocket.

The protein belongs to the class-I aminoacyl-tRNA synthetase family. Monomer. It depends on Zn(2+) as a cofactor.

It is found in the cytoplasm. The catalysed reaction is tRNA(Cys) + L-cysteine + ATP = L-cysteinyl-tRNA(Cys) + AMP + diphosphate. The chain is Cysteine--tRNA ligase from Streptococcus pyogenes serotype M18 (strain MGAS8232).